Consider the following 204-residue polypeptide: MRG/MORF4L-binding protein (204 aa).

Gly residues predominate over residues 1–15 (MGEAEVGGTGAPGDK). The interval 1–27 (MGEAEVGGTGAPGDKGPGEAAPSPAEE) is disordered. N-acetylglycine is present on glycine 2. Position 23 is a phosphoserine (serine 23). Residue lysine 127 forms a Glycyl lysine isopeptide (Lys-Gly) (interchain with G-Cter in SUMO2) linkage. Basic and acidic residues-rich tracts occupy residues 128–140 (EEMK…HSGA) and 153–175 (ALEK…EGAD). The segment at 128-204 (EEMKEDVDPH…SPSAAKRRRT (77 aa)) is disordered. A compositionally biased stretch (low complexity) spans 189–198 (ANSNPSSPSA). Phosphoserine is present on residues serine 191 and serine 195.

The protein belongs to the EAF7 family. In terms of assembly, component of the NuA4 histone acetyltransferase complex which contains the catalytic subunit KAT5/TIP60 and the subunits EP400, TRRAP/PAF400, BRD8/SMAP, EPC1, DMAP1/DNMAP1, RUVBL1/TIP49, RUVBL2, ING3, actin, ACTL6A/BAF53A, MORF4L1/MRG15, MORF4L2/MRGX, MRGBP, YEATS4/GAS41, VPS72/YL1 and MEAF6. MRGBP may interact directly with MORF4L1/MRG15 and MORF4L2/MRGX.

The protein resides in the nucleus. Its function is as follows. Component of the NuA4 histone acetyltransferase (HAT) complex which is involved in transcriptional activation of select genes principally by acetylation of nucleosomal histones H4 and H2A. This modification may both alter nucleosome - DNA interactions and promote interaction of the modified histones with other proteins which positively regulate transcription. This complex may be required for the activation of transcriptional programs associated with oncogene and proto-oncogene mediated growth induction, tumor suppressor mediated growth arrest and replicative senescence, apoptosis, and DNA repair. NuA4 may also play a direct role in DNA repair when recruited to sites of DNA damage. The sequence is that of MRG/MORF4L-binding protein (Mrgbp) from Mus musculus (Mouse).